We begin with the raw amino-acid sequence, 320 residues long: Aspartate carbamoyltransferase catalytic subunit (320 aa).

Carbamoyl phosphate-binding residues include R68 and T69. K96 lines the L-aspartate pocket. 3 residues coordinate carbamoyl phosphate: R118, H148, and Q151. L-aspartate contacts are provided by R181 and R236. G277 and P278 together coordinate carbamoyl phosphate.

The protein belongs to the aspartate/ornithine carbamoyltransferase superfamily. ATCase family. Heterododecamer (2C3:3R2) of six catalytic PyrB chains organized as two trimers (C3), and six regulatory PyrI chains organized as three dimers (R2).

It carries out the reaction carbamoyl phosphate + L-aspartate = N-carbamoyl-L-aspartate + phosphate + H(+). It participates in pyrimidine metabolism; UMP biosynthesis via de novo pathway; (S)-dihydroorotate from bicarbonate: step 2/3. Catalyzes the condensation of carbamoyl phosphate and aspartate to form carbamoyl aspartate and inorganic phosphate, the committed step in the de novo pyrimidine nucleotide biosynthesis pathway. The polypeptide is Aspartate carbamoyltransferase catalytic subunit (Methylibium petroleiphilum (strain ATCC BAA-1232 / LMG 22953 / PM1)).